We begin with the raw amino-acid sequence, 190 residues long: Glutamyl-tRNA(Gln) amidotransferase subunit C, mitochondrial (190 aa).

The transit peptide at 1-96 (MISFQIILQQ…VLNLKQAVRF (96 aa)) directs the protein to the mitochondrion. Residues 28-57 (KSNSTAVGSSDEDDEIYVPKKPIPSPIDQS) form a disordered region.

This sequence belongs to the GatC family. In terms of assembly, subunit of the heterotrimeric GatCAB amidotransferase (AdT) complex, composed of A, B and C subunits.

Its subcellular location is the mitochondrion. The enzyme catalyses L-glutamyl-tRNA(Gln) + L-glutamine + ATP + H2O = L-glutaminyl-tRNA(Gln) + L-glutamate + ADP + phosphate + H(+). Functionally, allows the formation of correctly charged Gln-tRNA(Gln) through the transamidation of misacylated Glu-tRNA(Gln) in the mitochondria. The reaction takes place in the presence of glutamine and ATP through an activated gamma-phospho-Glu-tRNA(Gln). In Loa loa (Eye worm), this protein is Glutamyl-tRNA(Gln) amidotransferase subunit C, mitochondrial.